The primary structure comprises 1692 residues: Regulating synaptic membrane exocytosis protein 1 (1692 aa).

Residues 1-26 (MSSAVGPRGPRPPTVPPPMQELPDLS) form a disordered region. The segment covering 9–20 (GPRPPTVPPPMQ) has biased composition (pro residues). One can recognise a RabBD domain in the interval 22–182 (LPDLSHLTEE…TKSGAWFFGS (161 aa)). The FYVE-type zinc finger occupies 110 to 170 (KDDAPTCGIC…VCNLCRKQQE (61 aa)). Residues Cys116, Cys119, Cys132, Cys135, Cys140, Cys143, Cys162, and Cys165 each contribute to the Zn(2+) site. Polar residues predominate over residues 183–199 (GPQQTSQDGTLSDTATG). Residues 183-555 (GPQQTSQDGT…CEDVELESES (373 aa)) form a disordered region. Residues 204–217 (VPREKKARLQERSR) are compositionally biased toward basic and acidic residues. A compositionally biased stretch (low complexity) spans 223–234 (STAAASSQDAAP). Basic and acidic residues predominate over residues 305–357 (VEERERKERRESRRLEKGRSQDYPDTPEKRDEGKAADEEKQRKEEDYQTRYRS). Basic residues predominate over residues 377 to 388 (MHARVSRARHER). The span at 412 to 430 (RAPAAARASPPDSPRAYSA) shows a compositional bias: low complexity. The segment covering 462 to 475 (PELKAQEPLRKQSR) has biased composition (basic and acidic residues). Over residues 497–509 (RNDSLSSDQSESV) the composition is skewed to polar residues. Phosphoserine is present on Ser500. Residues 515–527 (KPHRSKRGGKKRQ) are compositionally biased toward basic residues. Acidic residues predominate over residues 545 to 555 (SCEDVELESES). Ser578 bears the Phosphoserine mark. The region spanning 605 to 691 (RTTMPKDSGA…EPQVEIIVSR (87 aa)) is the PDZ domain. Positions 698–732 (RIPESSHPPLESSSSSFESQKMERPSISVISPTSP) are disordered. Residues 700 to 716 (PESSHPPLESSSSSFES) are compositionally biased toward low complexity. A phosphoserine mark is found at Ser728 and Ser731. A C2 1 domain is found at 742–865 (LPGQLSVKLW…ALLDDEPHWY (124 aa)). The tract at residues 870–1013 (HDESSLPLPQ…RTRDVDSQYL (144 aa)) is disordered. At Ser881 the chain carries Phosphoserine. Residues 935 to 944 (STTLTVPEQQ) show a composition bias toward polar residues. Ser977 bears the Phosphoserine mark. The span at 992–1009 (RHHDASRSPVDHRTRDVD) shows a compositional bias: basic and acidic residues. Phosphoserine is present on Ser1031. Disordered stretches follow at residues 1118–1222 (NCLR…EHSS) and 1235–1278 (GGSA…PVRS). Basic and acidic residues-rich tracts occupy residues 1128 to 1144 (SPERERGRWSPSLDRRR) and 1157 to 1170 (PENDRHSRKSERSS). The residue at position 1252 (Ser1252) is a Phosphoserine. The segment covering 1252 to 1265 (SPTQSPPADTSFSS) has biased composition (polar residues). Thr1254 carries the post-translational modification Phosphothreonine. Residues Ser1256, Ser1308, Ser1310, Ser1311, Ser1339, Ser1340, and Ser1342 each carry the phosphoserine modification. 3 disordered regions span residues 1332 to 1394 (CDNV…SGRS), 1408 to 1428 (LEHNDGSQSDTAVGTVGAGGK), and 1445 to 1495 (RSRS…GSIN). A compositionally biased stretch (low complexity) spans 1345–1366 (SDVSAISRTSSASRLSSTSFMS). Residue Ser1416 is modified to Phosphoserine. Over residues 1477-1490 (EMRKMVRQPSREST) the composition is skewed to basic and acidic residues. The C2 2 domain occupies 1538–1656 (AMGDIQIGME…DLSSMVIGWY (119 aa)). 4 positions are modified to phosphoserine: Ser1677, Ser1680, Ser1683, and Ser1692.

As to quaternary structure, binds RAB3A, RAB3B and RAB3D that have been activated by GTP-binding. Interacts with RAB3C, RAB10, RAB26 and RAB37. Binds UNC13A. Interacts with TSPOAP1 and RIMBP2. Interacts with PPFIA3 and PPFIA4. Interacts with ERC1. Binds SNAP25, SYT1 and CACNA1B. Interaction with SYT1 is enhanced by calcium ions. Interaction with SNAP25 is weaker in the presence of calcium ions. Phosphorylated by BRSK1. As to expression, expressed in melanocytes. Detected in brain and retina.

The protein resides in the cell membrane. Its subcellular location is the synapse. It is found in the presynaptic cell membrane. Functionally, rab effector involved in exocytosis. May act as scaffold protein that regulates neurotransmitter release at the active zone. Essential for maintaining normal probability of neurotransmitter release and for regulating release during short-term synaptic plasticity. Plays a role in dendrite formation by melanocytes. This chain is Regulating synaptic membrane exocytosis protein 1 (RIMS1), found in Homo sapiens (Human).